Reading from the N-terminus, the 409-residue chain is MTQTNFRSGPDANGLFGSFGGRYVAETLMPLVLDLNREYEAAKADPEFIKEMAYFQRDYVGRPNPLYFAERLTEFCGGAKIYFKREELNHTGAHKINNCIGQVLLAKRMGKKRLIAETGAGMHGVATATVAARFGLPCVIYMGATDIERQQANVFRMRLLGAEIVPVTSGTGTLKDAMNEALRDWVTNVDDTFYLIGTVAGPHPYPAMVRDFQAIIGKETKEQMLEKEGRLPDSLVACVGGGSNAMGLFHPFLDDASVEIIGVEAGGHGVSTDKHAASLNGGVPGVLHGNRTYLLQDGDGQITDAHSISAGLDYPGIGPEHAFLHEVKRVEYVSITDDEALDAFHQCCLLEGIIPALETAHALAEAMKRATNLRDDHLMVVCLSGRGDKDMQTVMNHMAAAEHTQEQLV.

An N6-(pyridoxal phosphate)lysine modification is found at lysine 95.

This sequence belongs to the TrpB family. As to quaternary structure, tetramer of two alpha and two beta chains. It depends on pyridoxal 5'-phosphate as a cofactor.

It catalyses the reaction (1S,2R)-1-C-(indol-3-yl)glycerol 3-phosphate + L-serine = D-glyceraldehyde 3-phosphate + L-tryptophan + H2O. Its pathway is amino-acid biosynthesis; L-tryptophan biosynthesis; L-tryptophan from chorismate: step 5/5. The beta subunit is responsible for the synthesis of L-tryptophan from indole and L-serine. In Pseudomonas syringae pv. syringae (strain B728a), this protein is Tryptophan synthase beta chain.